A 502-amino-acid chain; its full sequence is ATP synthase subunit alpha (502 aa).

169 to 176 (GDRQTGKT) serves as a coordination point for ATP.

The protein belongs to the ATPase alpha/beta chains family. F-type ATPases have 2 components, CF(1) - the catalytic core - and CF(0) - the membrane proton channel. CF(1) has five subunits: alpha(3), beta(3), gamma(1), delta(1), epsilon(1). CF(0) has three main subunits: a(1), b(2) and c(9-12). The alpha and beta chains form an alternating ring which encloses part of the gamma chain. CF(1) is attached to CF(0) by a central stalk formed by the gamma and epsilon chains, while a peripheral stalk is formed by the delta and b chains.

It is found in the cell membrane. The catalysed reaction is ATP + H2O + 4 H(+)(in) = ADP + phosphate + 5 H(+)(out). Its function is as follows. Produces ATP from ADP in the presence of a proton gradient across the membrane. The alpha chain is a regulatory subunit. This Staphylococcus aureus (strain COL) protein is ATP synthase subunit alpha.